The following is a 321-amino-acid chain: Ferredoxin--NADP reductase (321 aa).

FAD contacts are provided by E33, Q41, Y46, V86, L119, D277, and S318.

Belongs to the ferredoxin--NADP reductase type 2 family. As to quaternary structure, homodimer. The cofactor is FAD.

It catalyses the reaction 2 reduced [2Fe-2S]-[ferredoxin] + NADP(+) + H(+) = 2 oxidized [2Fe-2S]-[ferredoxin] + NADPH. This chain is Ferredoxin--NADP reductase, found in Lactococcus lactis subsp. lactis (strain IL1403) (Streptococcus lactis).